A 259-amino-acid polypeptide reads, in one-letter code: Imidazole glycerol phosphate synthase subunit HisF (259 aa).

Residues D11 and D130 contribute to the active site.

It belongs to the HisA/HisF family. In terms of assembly, heterodimer of HisH and HisF.

Its subcellular location is the cytoplasm. The catalysed reaction is 5-[(5-phospho-1-deoxy-D-ribulos-1-ylimino)methylamino]-1-(5-phospho-beta-D-ribosyl)imidazole-4-carboxamide + L-glutamine = D-erythro-1-(imidazol-4-yl)glycerol 3-phosphate + 5-amino-1-(5-phospho-beta-D-ribosyl)imidazole-4-carboxamide + L-glutamate + H(+). It functions in the pathway amino-acid biosynthesis; L-histidine biosynthesis; L-histidine from 5-phospho-alpha-D-ribose 1-diphosphate: step 5/9. In terms of biological role, IGPS catalyzes the conversion of PRFAR and glutamine to IGP, AICAR and glutamate. The HisF subunit catalyzes the cyclization activity that produces IGP and AICAR from PRFAR using the ammonia provided by the HisH subunit. This is Imidazole glycerol phosphate synthase subunit HisF from Lactococcus lactis subsp. cremoris (strain MG1363).